Reading from the N-terminus, the 366-residue chain is Flagellar P-ring protein (366 aa).

The N-terminal stretch at methionine 1–alanine 19 is a signal peptide.

It belongs to the FlgI family. As to quaternary structure, the basal body constitutes a major portion of the flagellar organelle and consists of four rings (L,P,S, and M) mounted on a central rod.

It is found in the periplasm. The protein resides in the bacterial flagellum basal body. In terms of biological role, assembles around the rod to form the L-ring and probably protects the motor/basal body from shearing forces during rotation. The polypeptide is Flagellar P-ring protein (Ruegeria pomeroyi (strain ATCC 700808 / DSM 15171 / DSS-3) (Silicibacter pomeroyi)).